A 272-amino-acid chain; its full sequence is Shikimate dehydrogenase (NADP(+)) (272 aa).

Residues 14 to 16 (SKS) and threonine 61 each bind shikimate. The Proton acceptor role is filled by lysine 65. Glutamate 77 provides a ligand contact to NADP(+). The shikimate site is built by asparagine 86 and aspartate 102. NADP(+) is bound by residues 126–130 (GAGGA), 149–154 (NRTVSR), and methionine 213. Position 215 (tyrosine 215) interacts with shikimate. Glycine 237 contacts NADP(+).

The protein belongs to the shikimate dehydrogenase family. As to quaternary structure, homodimer.

It catalyses the reaction shikimate + NADP(+) = 3-dehydroshikimate + NADPH + H(+). The protein operates within metabolic intermediate biosynthesis; chorismate biosynthesis; chorismate from D-erythrose 4-phosphate and phosphoenolpyruvate: step 4/7. Functionally, involved in the biosynthesis of the chorismate, which leads to the biosynthesis of aromatic amino acids. Catalyzes the reversible NADPH linked reduction of 3-dehydroshikimate (DHSA) to yield shikimate (SA). The sequence is that of Shikimate dehydrogenase (NADP(+)) from Shigella flexneri.